Reading from the N-terminus, the 225-residue chain is NAD(P)H-quinone oxidoreductase subunit K, chloroplastic (225 aa).

4 residues coordinate [4Fe-4S] cluster: Cys-43, Cys-44, Cys-108, and Cys-139.

It belongs to the complex I 20 kDa subunit family. NDH is composed of at least 16 different subunits, 5 of which are encoded in the nucleus. [4Fe-4S] cluster serves as cofactor.

It is found in the plastid. The protein localises to the chloroplast thylakoid membrane. It carries out the reaction a plastoquinone + NADH + (n+1) H(+)(in) = a plastoquinol + NAD(+) + n H(+)(out). The catalysed reaction is a plastoquinone + NADPH + (n+1) H(+)(in) = a plastoquinol + NADP(+) + n H(+)(out). NDH shuttles electrons from NAD(P)H:plastoquinone, via FMN and iron-sulfur (Fe-S) centers, to quinones in the photosynthetic chain and possibly in a chloroplast respiratory chain. The immediate electron acceptor for the enzyme in this species is believed to be plastoquinone. Couples the redox reaction to proton translocation, and thus conserves the redox energy in a proton gradient. This Crucihimalaya wallichii (Rock-cress) protein is NAD(P)H-quinone oxidoreductase subunit K, chloroplastic.